Reading from the N-terminus, the 213-residue chain is Sclerostin (213 aa).

Residues 1–23 (MQLPLALCLVCLLVHAAFRVVEG) form the signal peptide. The tract at residues 41 to 71 (GEYPEPPPELENNKTMNRAENGGRPPHHPFE) is disordered. Residue Asn-53 is glycosylated (N-linked (GlcNAc...) asparagine). 4 disulfides stabilise this stretch: Cys-80–Cys-134, Cys-94–Cys-148, Cys-105–Cys-165, and Cys-109–Cys-167. A CTCK domain is found at 82–172 (ELHFTRYVTD…ASCKCKRLTR (91 aa)). An N-linked (GlcNAc...) asparagine glycan is attached at Asn-175. The tract at residues 178-213 (ELKDFGPEAARPQKGRKPRPRARGAKANQAELENAY) is disordered. Residues 190 to 201 (QKGRKPRPRARG) are compositionally biased toward basic residues.

This sequence belongs to the sclerostin family. In terms of assembly, interacts with LRP4 (via the extracellular domain); the interaction facilitates the inhibition of Wnt signaling. Interacts with LRP5 (via the first two YWTD-EGF repeat domains); the interaction inhibits Wnt-mediated signaling. Interacts with LRP6.

The protein localises to the secreted. The protein resides in the extracellular space. It is found in the extracellular matrix. Negative regulator of bone growth that acts through inhibition of Wnt signaling and bone formation. The chain is Sclerostin from Chlorocebus aethiops (Green monkey).